Reading from the N-terminus, the 311-residue chain is Dihydroorotate dehydrogenase A (fumarate) (311 aa).

FMN is bound by residues serine 19 and 43–44 (KS). Substrate is bound by residues lysine 43, 67 to 71 (NSMGL), and asparagine 127. Asparagine 127 lines the FMN pocket. Cysteine 130 acts as the Nucleophile in catalysis. FMN-binding residues include lysine 164 and valine 192. Residue 193–194 (NS) participates in substrate binding. FMN is bound by residues glycine 221, 249–250 (GG), and 271–272 (GT).

The protein belongs to the dihydroorotate dehydrogenase family. Type 1 subfamily. As to quaternary structure, homodimer. It depends on FMN as a cofactor.

Its subcellular location is the cytoplasm. It catalyses the reaction (S)-dihydroorotate + fumarate = orotate + succinate. It participates in pyrimidine metabolism; UMP biosynthesis via de novo pathway. Catalyzes the conversion of dihydroorotate to orotate with fumarate as the electron acceptor. The sequence is that of Dihydroorotate dehydrogenase A (fumarate) (pyrDA) from Lactococcus lactis subsp. lactis (strain IL1403) (Streptococcus lactis).